The sequence spans 490 residues: Aspartyl/glutamyl-tRNA(Asn/Gln) amidotransferase subunit B (490 aa).

Belongs to the GatB/GatE family. GatB subfamily. As to quaternary structure, heterotrimer of A, B and C subunits.

It carries out the reaction L-glutamyl-tRNA(Gln) + L-glutamine + ATP + H2O = L-glutaminyl-tRNA(Gln) + L-glutamate + ADP + phosphate + H(+). It catalyses the reaction L-aspartyl-tRNA(Asn) + L-glutamine + ATP + H2O = L-asparaginyl-tRNA(Asn) + L-glutamate + ADP + phosphate + 2 H(+). Functionally, allows the formation of correctly charged Asn-tRNA(Asn) or Gln-tRNA(Gln) through the transamidation of misacylated Asp-tRNA(Asn) or Glu-tRNA(Gln) in organisms which lack either or both of asparaginyl-tRNA or glutaminyl-tRNA synthetases. The reaction takes place in the presence of glutamine and ATP through an activated phospho-Asp-tRNA(Asn) or phospho-Glu-tRNA(Gln). The polypeptide is Aspartyl/glutamyl-tRNA(Asn/Gln) amidotransferase subunit B (Methylobacterium radiotolerans (strain ATCC 27329 / DSM 1819 / JCM 2831 / NBRC 15690 / NCIMB 10815 / 0-1)).